The chain runs to 2772 residues: Protein DDB_G0276689 (2772 aa).

Disordered regions lie at residues 50-82 (QQLK…NNNN), 371-415 (NLET…NGKS), 475-514 (LDIN…KNNL), 612-650 (NKNN…NNNE), 685-708 (LRGS…DSSL), and 933-982 (LVNN…NNSN). Low complexity-rich tracts occupy residues 376 to 412 (NNNN…NNNN), 478 to 514 (NSKN…KNNL), 614 to 649 (NNNN…NNNN), and 688 to 708 (SFSP…DSSL). An LRR 1 repeat occupies 1065–1089 (LSKWILNLDDNNYNHIPFMSLVLMP). A disordered region spans residues 1282–1319 (NNNNIDNNNNNNNNNNNNNNNNNNNNNNNNNNNNNNNN). LRR repeat units lie at residues 1393 to 1416 (LSNL…TPKN) and 1543 to 1567 (HKDV…SFSN). Residues 1587–1619 (QNNNYNNNNYNNNYNNNNNNNNNNNNNNNNNNN) are compositionally biased toward low complexity. The disordered stretch occupies residues 1587–1622 (QNNNYNNNNYNNNYNNNNNNNNNNNNNNNNNNNIDN). The stretch at 1899 to 1922 (LEELTKQEIGYQVLLVLPTDLQVE) is one LRR 4 repeat. Polar residues-rich tracts occupy residues 1999-2011 (YVSN…NDQI) and 2073-2083 (LNIVHSTSPNS). 3 disordered regions span residues 1999–2021 (YVSN…KDKK), 2054–2083 (EISN…SPNS), and 2367–2386 (NNSS…NNNN). Residues 2414 to 2439 (TTIINNIEMDKNRLDEAIYYLKKYGN) form an LRR 5 repeat.

This chain is Protein DDB_G0276689, found in Dictyostelium discoideum (Social amoeba).